Reading from the N-terminus, the 118-residue chain is Probable non-functional immunoglobulin lambda variable 2-33 (118 aa).

The first 19 residues, 1–19, serve as a signal peptide directing secretion; the sequence is MAWALLLLTLLTQGTGSWA. Positions 20 to 44 are framework-1; that stretch reads QSALTQPPFVSGAPGQSVTISCTGT. The 85-residue stretch at 34–118 folds into the Ig-like domain; it reads GQSVTISCTG…CSLYSSSYTF (85 aa). The cysteines at positions 41 and 109 are disulfide-linked. The complementarity-determining-1 stretch occupies residues 45 to 53; it reads SSDVGDYDH. Positions 54–70 are framework-2; that stretch reads VFWYQKRLSTTSRLLIY. Positions 71 to 73 are complementarity-determining-2; the sequence is NVN. The framework-3 stretch occupies residues 74–109; that stretch reads TRPSGISDLFSGSKSGNMASLTISGLKSEVEANYHC. The interval 110–118 is complementarity-determining-3; the sequence is SLYSSSYTF.

As to quaternary structure, immunoglobulins are composed of two identical heavy chains and two identical light chains; disulfide-linked.

Its subcellular location is the secreted. It is found in the cell membrane. Its function is as follows. Probable non-functional open reading frame (ORF) of V region of the variable domain of immunoglobulin light chains. Non-functional ORF generally cannot participate in the synthesis of a productive immunoglobulin chain due to altered V-(D)-J or switch recombination and/or splicing site (at mRNA level) and/or conserved amino acid change (protein level). Immunoglobulins, also known as antibodies, are membrane-bound or secreted glycoproteins produced by B lymphocytes. In the recognition phase of humoral immunity, the membrane-bound immunoglobulins serve as receptors which, upon binding of a specific antigen, trigger the clonal expansion and differentiation of B lymphocytes into immunoglobulins-secreting plasma cells. Secreted immunoglobulins mediate the effector phase of humoral immunity, which results in the elimination of bound antigens. The antigen binding site is formed by the variable domain of one heavy chain, together with that of its associated light chain. Thus, each immunoglobulin has two antigen binding sites with remarkable affinity for a particular antigen. The variable domains are assembled by a process called V-(D)-J rearrangement and can then be subjected to somatic hypermutations which, after exposure to antigen and selection, allow affinity maturation for a particular antigen. In Homo sapiens (Human), this protein is Probable non-functional immunoglobulin lambda variable 2-33.